The chain runs to 180 residues: Large ribosomal subunit protein uL5 (180 aa).

This sequence belongs to the universal ribosomal protein uL5 family. In terms of assembly, part of the 50S ribosomal subunit; part of the 5S rRNA/L5/L18/L25 subcomplex. Contacts the 5S rRNA and the P site tRNA. Forms a bridge to the 30S subunit in the 70S ribosome.

Its function is as follows. This is one of the proteins that bind and probably mediate the attachment of the 5S RNA into the large ribosomal subunit, where it forms part of the central protuberance. In the 70S ribosome it contacts protein S13 of the 30S subunit (bridge B1b), connecting the 2 subunits; this bridge is implicated in subunit movement. Contacts the P site tRNA; the 5S rRNA and some of its associated proteins might help stabilize positioning of ribosome-bound tRNAs. This chain is Large ribosomal subunit protein uL5, found in Chlamydia abortus (strain DSM 27085 / S26/3) (Chlamydophila abortus).